Consider the following 345-residue polypeptide: S-adenosylmethionine:tRNA ribosyltransferase-isomerase (345 aa).

The protein belongs to the QueA family. As to quaternary structure, monomer.

The protein resides in the cytoplasm. It carries out the reaction 7-aminomethyl-7-carbaguanosine(34) in tRNA + S-adenosyl-L-methionine = epoxyqueuosine(34) in tRNA + adenine + L-methionine + 2 H(+). It functions in the pathway tRNA modification; tRNA-queuosine biosynthesis. Transfers and isomerizes the ribose moiety from AdoMet to the 7-aminomethyl group of 7-deazaguanine (preQ1-tRNA) to give epoxyqueuosine (oQ-tRNA). The sequence is that of S-adenosylmethionine:tRNA ribosyltransferase-isomerase from Shewanella amazonensis (strain ATCC BAA-1098 / SB2B).